We begin with the raw amino-acid sequence, 72 residues long: Translation initiation factor IF-1 (72 aa).

An S1-like domain is found at Met1 to Lys72.

This sequence belongs to the IF-1 family. In terms of assembly, component of the 30S ribosomal translation pre-initiation complex which assembles on the 30S ribosome in the order IF-2 and IF-3, IF-1 and N-formylmethionyl-tRNA(fMet); mRNA recruitment can occur at any time during PIC assembly.

The protein resides in the cytoplasm. One of the essential components for the initiation of protein synthesis. Stabilizes the binding of IF-2 and IF-3 on the 30S subunit to which N-formylmethionyl-tRNA(fMet) subsequently binds. Helps modulate mRNA selection, yielding the 30S pre-initiation complex (PIC). Upon addition of the 50S ribosomal subunit IF-1, IF-2 and IF-3 are released leaving the mature 70S translation initiation complex. This Agrobacterium fabrum (strain C58 / ATCC 33970) (Agrobacterium tumefaciens (strain C58)) protein is Translation initiation factor IF-1.